A 487-amino-acid chain; its full sequence is GTPase Der (487 aa).

EngA-type G domains lie at 3-166 (PVIA…PRDA) and 193-366 (IKIA…KSAV). GTP is bound by residues 9 to 16 (GRPNVGKS), 56 to 60 (DTGGI), 118 to 121 (NKID), 199 to 206 (GRPNVGKS), 246 to 250 (DTAGV), and 311 to 314 (NKWD). Residues 367-451 (TRWPTSRLTQ…PIRIEYKGGE (85 aa)) enclose the KH-like domain. The segment covering 448–461 (KGGENPYEGKKNTL) has biased composition (basic and acidic residues). The segment at 448 to 487 (KGGENPYEGKKNTLTDRQVNKKRRLMSHHKKAEKKRRDKR) is disordered. Residues 467-487 (NKKRRLMSHHKKAEKKRRDKR) show a composition bias toward basic residues.

It belongs to the TRAFAC class TrmE-Era-EngA-EngB-Septin-like GTPase superfamily. EngA (Der) GTPase family. Associates with the 50S ribosomal subunit.

Functionally, GTPase that plays an essential role in the late steps of ribosome biogenesis. The polypeptide is GTPase Der (Pseudomonas putida (strain W619)).